The chain runs to 595 residues: DNA-binding protein REB1 (595 aa).

Basic and acidic residues-rich tracts occupy residues K25–D46 and D54–N71. Residues K25–V208 form a disordered region. Residues A75–A84 show a composition bias toward low complexity. The span at K114–L123 shows a compositional bias: basic residues. The segment covering N163–N176 has biased composition (polar residues). The segment covering E182–D205 has biased composition (basic and acidic residues). One can recognise an HTH myb-type domain in the interval H333 to C384. Positions W360–V382 form a DNA-binding region, H-T-H motif. One can recognise a Myb-like domain in the interval G385–L490. The disordered stretch occupies residues T414–K456. A compositionally biased stretch (acidic residues) spans S434 to Q443.

It localises to the nucleus. In terms of biological role, DNA-binding protein that recognizes sites within both the enhancer and the promoter of rRNA transcription, as well as upstream of many genes transcribed by RNA polymerase II. It is essential for cell growth. May stimulate or inhibit transcription. Specifically recognizes the sequence 5'-CCGGGTA-3' or 5'-CGGGTRR-3' (where R is any purine). This Kluyveromyces lactis (strain ATCC 8585 / CBS 2359 / DSM 70799 / NBRC 1267 / NRRL Y-1140 / WM37) (Yeast) protein is DNA-binding protein REB1 (REB1).